Consider the following 250-residue polypeptide: Tail assembly protein GT (250 aa).

It belongs to the lambda-like tail assembly protein family. As to quaternary structure, interacts (via C-terminus) with tail tube protein. Interacts (via N-terminus) with the tail assembly protein G and the tape measure protein.

The protein localises to the host cytoplasm. Functionally, promotes tail assembly by creating a scaffold for the tail tube proteins. Tail assembly proteins G and GT probably wrap the linear tape measure protein to create a tail assembly scaffold. This allows the polymerization of the tail tube protein, during which G and GT are released, therefore they are absent in the mature virion. The tail assembly protein GT is produced by a rare -1 ribosomal frameshift. The ratio of translated G/GT is about 20, and this ratio is important for proper tail assembly. This Escherichia coli (Bacteriophage N15) protein is Tail assembly protein GT.